We begin with the raw amino-acid sequence, 200 residues long: Protein-methionine-sulfoxide reductase heme-binding subunit MsrQ (200 aa).

5 helical membrane-spanning segments follow: residues 8-28, 54-74, 79-99, 116-136, and 153-173; these read ITWLKVALHLAAFLPLVWLFY, LLLATLLVTPLTRLLKQPLLI, LLGLWCFAWATLHLVSYSLLE, PYLTLGIVSWLILLALALTSF, and FIYLVAILAPIHYLWSVKILS.

Belongs to the MsrQ family. In terms of assembly, heterodimer of a catalytic subunit (MsrP) and a heme-binding subunit (MsrQ). The cofactor is FMN. It depends on heme b as a cofactor.

It localises to the cell inner membrane. In terms of biological role, part of the MsrPQ system that repairs oxidized periplasmic proteins containing methionine sulfoxide residues (Met-O), using respiratory chain electrons. Thus protects these proteins from oxidative-stress damage caused by reactive species of oxygen and chlorine generated by the host defense mechanisms. MsrPQ is essential for the maintenance of envelope integrity under bleach stress, rescuing a wide series of structurally unrelated periplasmic proteins from methionine oxidation. MsrQ provides electrons for reduction to the reductase catalytic subunit MsrP, using the quinone pool of the respiratory chain. In Cronobacter sakazakii (strain ATCC BAA-894) (Enterobacter sakazakii), this protein is Protein-methionine-sulfoxide reductase heme-binding subunit MsrQ.